We begin with the raw amino-acid sequence, 103 residues long: Integration host factor subunit alpha (103 aa).

A disordered region spans residues 55-74 (CREKPQRPGRNPKTGEEMPI).

Belongs to the bacterial histone-like protein family. In terms of assembly, heterodimer of an alpha and a beta chain.

This protein is one of the two subunits of integration host factor, a specific DNA-binding protein that functions in genetic recombination as well as in transcriptional and translational control. The chain is Integration host factor subunit alpha from Thiobacillus denitrificans (strain ATCC 25259 / T1).